We begin with the raw amino-acid sequence, 88 residues long: Beta-insect excitatory toxin LqhIT1d (88 aa).

A signal peptide spans 1–18 (MKFFLLFLVVLPIMGVLG). The LCN-type CS-alpha/beta domain occupies 20–83 (KNGFAVDSNG…ISDTRKKLCD (64 aa)). Intrachain disulfides connect cysteine 34-cysteine 55, cysteine 40-cysteine 60, cysteine 44-cysteine 62, and cysteine 56-cysteine 82.

The protein belongs to the long (4 C-C) scorpion toxin superfamily. Sodium channel inhibitor family. Beta subfamily. In terms of tissue distribution, expressed by the venom gland.

Its subcellular location is the secreted. Its function is as follows. Excitatory insect toxins induce a spastic paralysis. They bind voltage-independently at site-4 of sodium channels (Nav) and shift the voltage of activation toward more negative potentials thereby affecting sodium channel activation and promoting spontaneous and repetitive firing. The polypeptide is Beta-insect excitatory toxin LqhIT1d (Leiurus hebraeus (Hebrew deathstalker scorpion)).